Consider the following 228-residue polypeptide: Thiamine-phosphate synthase (228 aa).

4-amino-2-methyl-5-(diphosphooxymethyl)pyrimidine is bound by residues 57 to 61 (QLRDK) and asparagine 89. Mg(2+) is bound by residues aspartate 90 and aspartate 109. 4-amino-2-methyl-5-(diphosphooxymethyl)pyrimidine is bound at residue serine 128. 154 to 156 (TPS) is a binding site for 2-[(2R,5Z)-2-carboxy-4-methylthiazol-5(2H)-ylidene]ethyl phosphate. 4-amino-2-methyl-5-(diphosphooxymethyl)pyrimidine is bound at residue lysine 157. Residues glycine 185 and 205–206 (IS) contribute to the 2-[(2R,5Z)-2-carboxy-4-methylthiazol-5(2H)-ylidene]ethyl phosphate site.

It belongs to the thiamine-phosphate synthase family. It depends on Mg(2+) as a cofactor.

It catalyses the reaction 2-[(2R,5Z)-2-carboxy-4-methylthiazol-5(2H)-ylidene]ethyl phosphate + 4-amino-2-methyl-5-(diphosphooxymethyl)pyrimidine + 2 H(+) = thiamine phosphate + CO2 + diphosphate. The catalysed reaction is 2-(2-carboxy-4-methylthiazol-5-yl)ethyl phosphate + 4-amino-2-methyl-5-(diphosphooxymethyl)pyrimidine + 2 H(+) = thiamine phosphate + CO2 + diphosphate. It carries out the reaction 4-methyl-5-(2-phosphooxyethyl)-thiazole + 4-amino-2-methyl-5-(diphosphooxymethyl)pyrimidine + H(+) = thiamine phosphate + diphosphate. Its pathway is cofactor biosynthesis; thiamine diphosphate biosynthesis; thiamine phosphate from 4-amino-2-methyl-5-diphosphomethylpyrimidine and 4-methyl-5-(2-phosphoethyl)-thiazole: step 1/1. Functionally, condenses 4-methyl-5-(beta-hydroxyethyl)thiazole monophosphate (THZ-P) and 2-methyl-4-amino-5-hydroxymethyl pyrimidine pyrophosphate (HMP-PP) to form thiamine monophosphate (TMP). The chain is Thiamine-phosphate synthase from Roseiflexus castenholzii (strain DSM 13941 / HLO8).